Consider the following 166-residue polypeptide: Disulfide bond formation protein B (166 aa).

Residues 1 to 12 are Cytoplasmic-facing; the sequence is MKITKLPSYRQT. Residues 13-29 traverse the membrane as a helical segment; the sequence is ALIIFAGCVGLILAALY. Residues 30–47 lie on the Periplasmic side of the membrane; the sequence is MQEVLGLHPCPLCITQRI. Cys-39 and Cys-42 are joined by a disulfide. A helical transmembrane segment spans residues 48 to 64; it reads FIIGVGLISLIAAIHNP. Topologically, residues 65-70 are cytoplasmic; sequence AALGRK. A helical transmembrane segment spans residues 71–88; sequence VYGCLATLSGVIGAGVSA. Topologically, residues 89–145 are periplasmic; sequence RHVWLQNLPEDQVPACGPDLAYMFDAFPLLDALKLLFAGDGNCADVVASFLGLSIPG. Cysteines 104 and 131 form a disulfide. Residues 146–164 form a helical membrane-spanning segment; sequence WTFVAFVGLIAISVWQGLR. The Cytoplasmic segment spans residues 165–166; that stretch reads KA.

It belongs to the DsbB family.

It localises to the cell inner membrane. Required for disulfide bond formation in some periplasmic proteins. Acts by oxidizing the DsbA protein. In Saccharophagus degradans (strain 2-40 / ATCC 43961 / DSM 17024), this protein is Disulfide bond formation protein B.